Reading from the N-terminus, the 1541-residue chain is Multiple epidermal growth factor-like domains protein 6 (1541 aa).

The N-terminal stretch at 1 to 30 is a signal peptide; sequence MSFLEEARAAGRAVVLALVLLLLPAVPVGA. Positions 44 to 125 constitute an EMI domain; sequence MPHVCAEQEL…QQPDEEGCLS (82 aa). Cystine bridges form between Cys-48/Cys-111, Cys-77/Cys-83, Cys-110/Cys-123, Cys-128/Cys-139, Cys-133/Cys-147, Cys-149/Cys-158, Cys-165/Cys-176, Cys-172/Cys-185, Cys-187/Cys-200, Cys-242/Cys-255, Cys-248/Cys-268, Cys-270/Cys-283, Cys-289/Cys-300, Cys-296/Cys-309, and Cys-311/Cys-324. The region spanning 124–159 is the EGF-like 1 domain; sequence LSAECSASLCFHGGRCVPGSAQPCHCPPGFQGPRCQ. Positions 161-201 constitute an EGF-like 2; calcium-binding domain; the sequence is DVDECRTHNGGCQHRCVNTPGSYLCECKPGFRLHTDSRTCL. EGF-like domains follow at residues 206–242 and 238–284; these read CALG…GRHC and DGRH…KACE. N-linked (GlcNAc...) asparagine glycosylation occurs at Asn-252. The EGF-like 5; calcium-binding domain occupies 285–325; that stretch reads DVDECAAGLAQCAHGCLNTQGSFKCVCHAGYELGADGRQCY. 2 consecutive EGF-like domains span residues 335-370 and 375-411; these read CEAN…QRTC and DCAD…CGCE. In terms of domain architecture, EGF-like 8; calcium-binding spans 412-452; it reads DVDECASSRGGCEHHCTNLAGSFQCSCEAGYRLHEDRRGCS. Cystine bridges form between Cys-416/Cys-427, Cys-423/Cys-436, Cys-438/Cys-451, Cys-520/Cys-533, Cys-527/Cys-540, Cys-542/Cys-551, Cys-564/Cys-576, Cys-570/Cys-583, Cys-585/Cys-594, Cys-607/Cys-619, Cys-613/Cys-626, and Cys-628/Cys-637. EGF-like domains lie at 516–552, 560–595, 603–638, 736–770, 783–814, 822–857, 865–901, 909–944, 955–987, 995–1030, 1038–1073, 1081–1116, 1124–1159, 1211–1246, 1254–1289, 1297–1332, 1345–1375, 1383–1418, and 1469–1504; these read FGHD…LICN, FGKN…TNCE, YGKH…RFCH, FGVN…EDCE, QEIC…SRCQ, YGPS…FSCQ, WGPD…PRCE, FGPG…TFCE, DCRS…PRCA, YGHN…PSCL, YGDN…LACE, VRAG…DKCQ, FGEA…SGCE, YGPG…TDCN, FGPN…VRCE, FGVG…RHCE, HLEC…QACE, HGAG…HFCE, and FGPS…PTCR. N-linked (GlcNAc...) asparagine glycosylation occurs at Asn-739. 15 cysteine pairs are disulfide-bonded: Cys-740–Cys-751, Cys-744–Cys-758, Cys-760–Cys-769, Cys-786–Cys-795, Cys-789–Cys-802, Cys-804–Cys-813, Cys-826–Cys-838, Cys-832–Cys-845, Cys-847–Cys-856, Cys-869–Cys-882, Cys-873–Cys-889, Cys-891–Cys-900, Cys-913–Cys-925, Cys-919–Cys-932, and Cys-934–Cys-943. 30 cysteine pairs are disulfide-bonded: Cys-999/Cys-1011, Cys-1005/Cys-1018, Cys-1020/Cys-1029, Cys-1042/Cys-1054, Cys-1048/Cys-1061, Cys-1063/Cys-1072, Cys-1085/Cys-1097, Cys-1091/Cys-1104, Cys-1106/Cys-1115, Cys-1128/Cys-1140, Cys-1134/Cys-1147, Cys-1149/Cys-1158, Cys-1215/Cys-1227, Cys-1221/Cys-1234, Cys-1236/Cys-1245, Cys-1258/Cys-1270, Cys-1264/Cys-1277, Cys-1279/Cys-1288, Cys-1301/Cys-1313, Cys-1307/Cys-1320, Cys-1322/Cys-1331, Cys-1348/Cys-1356, Cys-1350/Cys-1363, Cys-1365/Cys-1374, Cys-1387/Cys-1399, Cys-1393/Cys-1406, Cys-1408/Cys-1417, Cys-1473/Cys-1485, Cys-1479/Cys-1492, and Cys-1494/Cys-1503. The interval 1509–1541 is disordered; sequence LRLPENPSLAQGSAGTLPASSRPTSRSGGPARH. Residues 1516–1535 are compositionally biased toward polar residues; that stretch reads SLAQGSAGTLPASSRPTSRS.

Its subcellular location is the secreted. The polypeptide is Multiple epidermal growth factor-like domains protein 6 (MEGF6) (Homo sapiens (Human)).